A 207-amino-acid chain; its full sequence is Large ribosomal subunit protein uL4 (207 aa).

Belongs to the universal ribosomal protein uL4 family. In terms of assembly, part of the 50S ribosomal subunit.

Functionally, one of the primary rRNA binding proteins, this protein initially binds near the 5'-end of the 23S rRNA. It is important during the early stages of 50S assembly. It makes multiple contacts with different domains of the 23S rRNA in the assembled 50S subunit and ribosome. Forms part of the polypeptide exit tunnel. The polypeptide is Large ribosomal subunit protein uL4 (Rickettsia peacockii (strain Rustic)).